The following is a 571-amino-acid chain: Proline--tRNA ligase (571 aa).

It belongs to the class-II aminoacyl-tRNA synthetase family. ProS type 1 subfamily. In terms of assembly, homodimer.

It is found in the cytoplasm. It carries out the reaction tRNA(Pro) + L-proline + ATP = L-prolyl-tRNA(Pro) + AMP + diphosphate. In terms of biological role, catalyzes the attachment of proline to tRNA(Pro) in a two-step reaction: proline is first activated by ATP to form Pro-AMP and then transferred to the acceptor end of tRNA(Pro). As ProRS can inadvertently accommodate and process non-cognate amino acids such as alanine and cysteine, to avoid such errors it has two additional distinct editing activities against alanine. One activity is designated as 'pretransfer' editing and involves the tRNA(Pro)-independent hydrolysis of activated Ala-AMP. The other activity is designated 'posttransfer' editing and involves deacylation of mischarged Ala-tRNA(Pro). The misacylated Cys-tRNA(Pro) is not edited by ProRS. The polypeptide is Proline--tRNA ligase (Proteus mirabilis (strain HI4320)).